The primary structure comprises 158 residues: C-type lectin BfL-1 (158 aa).

Residues 1 to 21 (MGHFTFIGLCLLAMFLSLSGA) form the signal peptide. 4 cysteine pairs are disulfide-bonded: Cys-26–Cys-37, Cys-54–Cys-154, Cys-61–Cys-156, and Cys-129–Cys-146. The 123-residue stretch at 33-155 (KNGLCYKVFS…CAALRPFLCQ (123 aa)) folds into the C-type lectin domain. Positions 119, 121, and 127 each coordinate Ca(2+). The Galactose-binding signature appears at 119-121 (QPD). Asn-134 carries N-linked (GlcNAc...) asparagine glycosylation. Ca(2+) is bound by residues Asn-142 and Asp-143.

This sequence belongs to the true venom lectin family. As to quaternary structure, homodimer; non-covalently linked. In terms of tissue distribution, expressed by the venom gland.

It localises to the secreted. Galactose-binding lectin which recognizes specific carbohydrate structures and agglutinates a variety of animal cells by binding to cell-surface glycoproteins and glycolipids. May be a calcium-dependent lectin. The chain is C-type lectin BfL-1 from Bungarus fasciatus (Banded krait).